The following is a 263-amino-acid chain: Complement C1q tumor necrosis factor-related protein 6 (263 aa).

An N-terminal signal peptide occupies residues 1 to 24 (MRVIMGTASLGSIWAVFLLPLVFG). N-linked (GlcNAc...) asparagine glycosylation occurs at N76. The segment at 80–123 (LKGDKGDRGPSGTPGKPGKNGTRGDRGSQGIKGDKGQAGSPGSS) is disordered. Positions 82–123 (GDKGDRGPSGTPGKPGKNGTRGDRGSQGIKGDKGQAGSPGSS) constitute a Collagen-like domain. Residues 124 to 263 (CQTHYSAFSV…SGHLIKAEDN (140 aa)) enclose the C1q domain.

It is found in the secreted. This Rattus norvegicus (Rat) protein is Complement C1q tumor necrosis factor-related protein 6 (C1qtnf6).